The chain runs to 452 residues: Ribosomal protein uS12 methylthiotransferase RimO (452 aa).

Residues 3 to 122 enclose the MTTase N-terminal domain; that stretch reads LTVGLISLGC…LPEIITQVMD (120 aa). [4Fe-4S] cluster-binding residues include C12, C48, C85, C162, C166, and C169. In terms of domain architecture, Radical SAM core spans 148 to 392; sequence LTPPHTAYIK…TLLLARLASE (245 aa). The TRAM domain occupies 395–452; the sequence is QEQIGRQIRVLVDAPGVARTEWDAPDIDGTVSVPLTLPVGQFATVTVTDAVAYELTAE.

This sequence belongs to the methylthiotransferase family. RimO subfamily. [4Fe-4S] cluster is required as a cofactor.

It localises to the cytoplasm. It carries out the reaction L-aspartate(89)-[ribosomal protein uS12]-hydrogen + (sulfur carrier)-SH + AH2 + 2 S-adenosyl-L-methionine = 3-methylsulfanyl-L-aspartate(89)-[ribosomal protein uS12]-hydrogen + (sulfur carrier)-H + 5'-deoxyadenosine + L-methionine + A + S-adenosyl-L-homocysteine + 2 H(+). In terms of biological role, catalyzes the methylthiolation of an aspartic acid residue of ribosomal protein uS12. The polypeptide is Ribosomal protein uS12 methylthiotransferase RimO (Akkermansia muciniphila (strain ATCC BAA-835 / DSM 22959 / JCM 33894 / BCRC 81048 / CCUG 64013 / CIP 107961 / Muc)).